An 803-amino-acid polypeptide reads, in one-letter code: Translation initiation factor IF-2 (803 aa).

Positions 65–75 (PDKVEEKKEHT) are enriched in basic and acidic residues. The tract at residues 65 to 186 (PDKVEEKKEH…PKSRKSKTLK (122 aa)) is disordered. Basic residues predominate over residues 175–185 (NKPKSRKSKTL). One can recognise a tr-type G domain in the interval 300–468 (IRPPVVTIMG…ILLTADAALE (169 aa)). The interval 309-316 (GHVDHGKT) is G1. Residue 309-316 (GHVDHGKT) coordinates GTP. The tract at residues 334–338 (GITQH) is G2. The segment at 355 to 358 (DTPG) is G3. Residues 355–359 (DTPGH) and 409–412 (NKID) contribute to the GTP site. The tract at residues 409 to 412 (NKID) is G4. A G5 region spans residues 445 to 447 (SAK).

The protein belongs to the TRAFAC class translation factor GTPase superfamily. Classic translation factor GTPase family. IF-2 subfamily.

The protein localises to the cytoplasm. Its function is as follows. One of the essential components for the initiation of protein synthesis. Protects formylmethionyl-tRNA from spontaneous hydrolysis and promotes its binding to the 30S ribosomal subunits. Also involved in the hydrolysis of GTP during the formation of the 70S ribosomal complex. This chain is Translation initiation factor IF-2, found in Tropheryma whipplei (strain TW08/27) (Whipple's bacillus).